The chain runs to 561 residues: Dihydroxy-acid dehydratase (561 aa).

Position 50 (Cys50) interacts with [2Fe-2S] cluster. Asp82 serves as a coordination point for Mg(2+). Residue Cys123 participates in [2Fe-2S] cluster binding. Positions 124 and 125 each coordinate Mg(2+). Residue Lys125 is modified to N6-carboxylysine. Cys195 serves as a coordination point for [2Fe-2S] cluster. Glu447 provides a ligand contact to Mg(2+). Ser473 serves as the catalytic Proton acceptor.

The protein belongs to the IlvD/Edd family. Homodimer. The cofactor is [2Fe-2S] cluster. It depends on Mg(2+) as a cofactor.

The catalysed reaction is (2R)-2,3-dihydroxy-3-methylbutanoate = 3-methyl-2-oxobutanoate + H2O. It carries out the reaction (2R,3R)-2,3-dihydroxy-3-methylpentanoate = (S)-3-methyl-2-oxopentanoate + H2O. It participates in amino-acid biosynthesis; L-isoleucine biosynthesis; L-isoleucine from 2-oxobutanoate: step 3/4. It functions in the pathway amino-acid biosynthesis; L-valine biosynthesis; L-valine from pyruvate: step 3/4. Its function is as follows. Functions in the biosynthesis of branched-chain amino acids. Catalyzes the dehydration of (2R,3R)-2,3-dihydroxy-3-methylpentanoate (2,3-dihydroxy-3-methylvalerate) into 2-oxo-3-methylpentanoate (2-oxo-3-methylvalerate) and of (2R)-2,3-dihydroxy-3-methylbutanoate (2,3-dihydroxyisovalerate) into 2-oxo-3-methylbutanoate (2-oxoisovalerate), the penultimate precursor to L-isoleucine and L-valine, respectively. This chain is Dihydroxy-acid dehydratase, found in Synechocystis sp. (strain ATCC 27184 / PCC 6803 / Kazusa).